Reading from the N-terminus, the 539-residue chain is Bifunctional purine biosynthesis protein PurH (539 aa).

The MGS-like domain maps to 8-159; sequence FPIPDLHRVR…KNYAYTGVVT (152 aa).

It belongs to the PurH family.

It catalyses the reaction (6R)-10-formyltetrahydrofolate + 5-amino-1-(5-phospho-beta-D-ribosyl)imidazole-4-carboxamide = 5-formamido-1-(5-phospho-D-ribosyl)imidazole-4-carboxamide + (6S)-5,6,7,8-tetrahydrofolate. The catalysed reaction is IMP + H2O = 5-formamido-1-(5-phospho-D-ribosyl)imidazole-4-carboxamide. It participates in purine metabolism; IMP biosynthesis via de novo pathway; 5-formamido-1-(5-phospho-D-ribosyl)imidazole-4-carboxamide from 5-amino-1-(5-phospho-D-ribosyl)imidazole-4-carboxamide (10-formyl THF route): step 1/1. It functions in the pathway purine metabolism; IMP biosynthesis via de novo pathway; IMP from 5-formamido-1-(5-phospho-D-ribosyl)imidazole-4-carboxamide: step 1/1. This Bartonella tribocorum (strain CIP 105476 / IBS 506) protein is Bifunctional purine biosynthesis protein PurH.